The following is a 234-amino-acid chain: Small ribosomal subunit protein uS3 (234 aa).

The region spanning 39–107 (VRDYLKKKLS…PVHVNIEEVR (69 aa)) is the KH type-2 domain. A disordered region spans residues 212–234 (EQPAAAEQEKRGKKSGVKHAAAS).

The protein belongs to the universal ribosomal protein uS3 family. As to quaternary structure, part of the 30S ribosomal subunit. Forms a tight complex with proteins S10 and S14.

Functionally, binds the lower part of the 30S subunit head. Binds mRNA in the 70S ribosome, positioning it for translation. This Thiobacillus denitrificans (strain ATCC 25259 / T1) protein is Small ribosomal subunit protein uS3.